The primary structure comprises 212 residues: Membrane-bound lytic murein transglycosylase E (212 aa).

The protein belongs to the transglycosylase Slt family.

The catalysed reaction is Exolytic cleavage of the (1-&gt;4)-beta-glycosidic linkage between N-acetylmuramic acid (MurNAc) and N-acetylglucosamine (GlcNAc) residues in peptidoglycan, from either the reducing or the non-reducing ends of the peptidoglycan chains, with concomitant formation of a 1,6-anhydrobond in the MurNAc residue.. Functionally, murein-degrading enzyme. May play a role in recycling of muropeptides during cell elongation and/or cell division. The sequence is that of Membrane-bound lytic murein transglycosylase E (mltE) from Buchnera aphidicola subsp. Baizongia pistaciae (strain Bp).